A 341-amino-acid polypeptide reads, in one-letter code: Small ribosomal subunit biogenesis GTPase RsgA (341 aa).

Residues 112–268 enclose the CP-type G domain; it reads RQQLIAANLD…LIDTPGMREL (157 aa). GTP is bound by residues 157–160 and 210–218; these read TKVD and GSSGAGKST. Cys-290, Cys-295, His-297, and Cys-303 together coordinate Zn(2+).

It belongs to the TRAFAC class YlqF/YawG GTPase family. RsgA subfamily. As to quaternary structure, monomer. Associates with 30S ribosomal subunit, binds 16S rRNA. Zn(2+) is required as a cofactor.

Its subcellular location is the cytoplasm. In terms of biological role, one of several proteins that assist in the late maturation steps of the functional core of the 30S ribosomal subunit. Helps release RbfA from mature subunits. May play a role in the assembly of ribosomal proteins into the subunit. Circularly permuted GTPase that catalyzes slow GTP hydrolysis, GTPase activity is stimulated by the 30S ribosomal subunit. This is Small ribosomal subunit biogenesis GTPase RsgA from Xylella fastidiosa (strain 9a5c).